Consider the following 93-residue polypeptide: MKKYEIMYILRPNLDNNEVKKINDHLESVFSKKPSTILEKKEIGLKDLAYPINNHKKGYYYWFITQTDNEAVLEFNRIVKITEEVIRFIIIKE.

It belongs to the bacterial ribosomal protein bS6 family.

Functionally, binds together with bS18 to 16S ribosomal RNA. The chain is Small ribosomal subunit protein bS6 from Phytoplasma australiense.